The following is a 433-amino-acid chain: 3-phosphoshikimate 1-carboxyvinyltransferase (433 aa).

3-phosphoshikimate contacts are provided by lysine 23, serine 24, and arginine 28. Phosphoenolpyruvate is bound at residue lysine 23. Positions 95 and 123 each coordinate phosphoenolpyruvate. 3-phosphoshikimate-binding residues include serine 170, serine 171, glutamine 172, serine 198, aspartate 317, and lysine 344. Glutamine 172 provides a ligand contact to phosphoenolpyruvate. The active-site Proton acceptor is aspartate 317. Phosphoenolpyruvate-binding residues include arginine 348, arginine 391, and lysine 416.

The protein belongs to the EPSP synthase family. In terms of assembly, monomer.

It is found in the cytoplasm. The catalysed reaction is 3-phosphoshikimate + phosphoenolpyruvate = 5-O-(1-carboxyvinyl)-3-phosphoshikimate + phosphate. It functions in the pathway metabolic intermediate biosynthesis; chorismate biosynthesis; chorismate from D-erythrose 4-phosphate and phosphoenolpyruvate: step 6/7. In terms of biological role, catalyzes the transfer of the enolpyruvyl moiety of phosphoenolpyruvate (PEP) to the 5-hydroxyl of shikimate-3-phosphate (S3P) to produce enolpyruvyl shikimate-3-phosphate and inorganic phosphate. In Neisseria gonorrhoeae (strain NCCP11945), this protein is 3-phosphoshikimate 1-carboxyvinyltransferase.